A 220-amino-acid chain; its full sequence is Ribonuclease HII (220 aa).

The 210-residue stretch at 1 to 210 (MKVAGVDEAG…ARKIEERFRK (210 aa)) folds into the RNase H type-2 domain. A divalent metal cation is bound by residues D7, E8, and D105.

Belongs to the RNase HII family. The cofactor is Mn(2+). It depends on Mg(2+) as a cofactor.

It is found in the cytoplasm. The enzyme catalyses Endonucleolytic cleavage to 5'-phosphomonoester.. Its function is as follows. Endonuclease that specifically degrades the RNA of RNA-DNA hybrids. This is Ribonuclease HII (rnhB) from Pyrococcus horikoshii (strain ATCC 700860 / DSM 12428 / JCM 9974 / NBRC 100139 / OT-3).